Consider the following 335-residue polypeptide: Nucleoid-associated protein YejK (335 aa).

The protein belongs to the YejK family.

It is found in the cytoplasm. The protein localises to the nucleoid. The chain is Nucleoid-associated protein YejK from Salmonella schwarzengrund (strain CVM19633).